Here is a 537-residue protein sequence, read N- to C-terminus: Glucose-6-phosphate isomerase (537 aa).

Catalysis depends on glutamate 355, which acts as the Proton donor. Residues histidine 386 and lysine 501 contribute to the active site.

Belongs to the GPI family.

The protein localises to the cytoplasm. The enzyme catalyses alpha-D-glucose 6-phosphate = beta-D-fructose 6-phosphate. The protein operates within carbohydrate biosynthesis; gluconeogenesis. Its pathway is carbohydrate degradation; glycolysis; D-glyceraldehyde 3-phosphate and glycerone phosphate from D-glucose: step 2/4. Catalyzes the reversible isomerization of glucose-6-phosphate to fructose-6-phosphate. In Protochlamydia amoebophila (strain UWE25), this protein is Glucose-6-phosphate isomerase.